Consider the following 243-residue polypeptide: Terpene cyclase atmB (243 aa).

Helical transmembrane passes span 19–39 (IADVFVIGMGIGWIINYVGMV), 48–68 (YGMAIMPLCCNIAWEIVYGLI), 78–98 (GVFLSGLTINLGVIYTAIKFG), 112–132 (LPLIFMLGILGFLTGHLALAA), 134–154 (IGPALAYNWGAAFCQLLLSVG), 169–189 (SYTLWLSRFLGSFSVVISAWL), and 205–225 (LILWCLFAWLVVDGSYGVCFY).

It belongs to the paxB family.

It is found in the membrane. Its function is as follows. Terpene cyclase; part of the ATM2 gene cluster that mediates the biosynthesis of aflatrem, a tremorgenic mycotoxin with acute neurotoxic effects. Synthesis of geranylgeranyl diphosphate (GGPP) by AtmG (a GGPP synthase) precedes condensation of GGPP with indole 3-glycerol phosphate, followed by epoxidation and cyclization by AtmM (a FAD-dependent monooxygenase) and AtmC (a prenyltransferase) to produce paspaline. AtmB is also essential for paspaline production, but its exact role has not been identified yet. AtmP, a cytochrome P450 monooxygenase, subsequently converts paspaline to 13-desoxypaxilline via PC-M6 by removal of the C-30 methyl group and oxidation at C-10. AtmQ, a cytochrome P450 monooxygenase, then catalyzes the oxidation of 13-desoxypaxilline, first at C-7 to produce paspalicine and then at C-13 to form paspalinine. Finally, AtmD prenylates paspalinine to form aflatrem. This Aspergillus flavus protein is Terpene cyclase atmB.